Here is a 568-residue protein sequence, read N- to C-terminus: Natural resistance-associated macrophage protein 2 (568 aa).

Residues 1 to 40 form a disordered region; sequence MVLGPEQKMSDDSVSGDHGESASLGNINPAYSNPSLSQSP. Residues 1 to 69 are Cytoplasmic-facing; that stretch reads MVLGPEQKMS…EEYSCFSFRK (69 aa). A compositionally biased stretch (basic and acidic residues) spans 8–20; sequence KMSDDSVSGDHGE. Over residues 23–40 the composition is skewed to polar residues; that stretch reads SLGNINPAYSNPSLSQSP. The chain crosses the membrane as a helical span at residues 70 to 90; that stretch reads LWAFTGPGFLMSIAYLDPGNI. At 91-96 the chain is on the extracellular side; the sequence is ESDLQS. Residues 97–117 form a helical membrane-spanning segment; sequence GAVAGFKLLWILLLATLVGLL. Over 118 to 154 the chain is Cytoplasmic; the sequence is LQRLAARLGVVTGLHLAEVCHRQYPKVPRVILWLMVE. A helical membrane pass occupies residues 155–175; that stretch reads LAIIGSDMQEVIGSAIAINLL. Residues 176–179 lie on the Extracellular side of the membrane; that stretch reads SVGR. Residues 180 to 200 traverse the membrane as a helical segment; sequence IPLWGGVLITIADTFVFLFLD. Residues 201-208 are Cytoplasmic-facing; it reads KYGLRKLE. Residues 209–229 form a helical membrane-spanning segment; that stretch reads AFFGFLITIMALTFGYEYVTV. Topologically, residues 230–255 are extracellular; the sequence is KPSQSQVLKGMFVPSCSGCRTPQIEQ. A helical membrane pass occupies residues 256–276; the sequence is AVGIVGAVIMPHNMYLHSALV. At 277 to 301 the chain is on the cytoplasmic side; sequence KSRQVNRNNKQEVREANKYFFIESC. The chain crosses the membrane as a helical span at residues 302 to 322; that stretch reads IALFVSFIINVFVVSVFAEAF. Residues 323–360 lie on the Extracellular side of the membrane; the sequence is FGKTNEQVVEVCTNTSSPHAGLFPKDNSTLAVDIYKGG. Asn336 and Asn349 each carry an N-linked (GlcNAc...) asparagine glycan. Residues 361–381 traverse the membrane as a helical segment; sequence VVLGCYFGPAALYIWAVGILA. The Cytoplasmic portion of the chain corresponds to 382 to 408; the sequence is AGQSSTMTGTYSGQFVMEGFLNLKWSR. A helical transmembrane segment spans residues 409–429; the sequence is FARVVLTRSIAIIPTLLVAVF. The Extracellular segment spans residues 430–440; sequence QDVEHLTGMND. Residues 441–461 traverse the membrane as a helical segment; it reads FLNVLQSLQLPFALIPILTFT. The Cytoplasmic segment spans residues 462 to 482; it reads SLRPVMSDFANGLGWRIAGGI. The helical transmembrane segment at 483-503 threads the bilayer; sequence LVLIICSINMYFVVVYVRDLG. Residues 504–506 lie on the Extracellular side of the membrane; the sequence is HVA. The helical transmembrane segment at 507–527 threads the bilayer; sequence LYVVAAVVSVAYLGFVFYLGW. The Cytoplasmic segment spans residues 528–568; sequence QCLIALGMSFLDCGHTCHLGLTAQPELYLLNTMDADSLVSR. The segment at 555–559 is required for early endosome targeting; sequence YLLNT. Phosphoserine is present on residues Ser564 and Ser567.

The protein belongs to the NRAMP family. As to quaternary structure, forms a complex with NDFIP1 and NEDD4L, in cortical neurons, in response to iron and cobalt exposure; this interaction leads to SLC11A2 ubiquitination by NEDD4L and proteasome-dependent degradation. Interacts with NDFIP1, NDFIP2 and WWP2; this interaction leads to SLC11A2 ubiquitination by WWP2 and subsequent proteasome-dependent degradation. Interacts with COX2 and TOM6 at the outer mitochondrion membrane. Interacts with ARRDC1; this interaction regulates the incorporation of SLC11A2 into extracellular vesicles through an ubiquitination-dependent mechanism. Interacts with ARRDC4; controls the incorporation of SLC11A2 into extracellular vesicles through an ubiquitination-dependent mechanism. Ubiquitinated by WWP2. In terms of processing, N-glycosylated. In terms of tissue distribution, ubiquitously expressed. Expressed in erythroid progenitors.

It localises to the early endosome membrane. The protein localises to the apical cell membrane. The protein resides in the late endosome membrane. It is found in the lysosome membrane. Its subcellular location is the cell membrane. It localises to the extracellular vesicle membrane. The protein localises to the mitochondrion outer membrane. The protein resides in the golgi apparatus. It is found in the trans-Golgi network membrane. Its subcellular location is the recycling endosome membrane. It carries out the reaction Fe(2+)(in) + H(+)(in) = Fe(2+)(out) + H(+)(out). The catalysed reaction is Co(2+)(out) + H(+)(out) = Co(2+)(in) + H(+)(in). It catalyses the reaction Cd(2+)(out) + H(+)(out) = Cd(2+)(in) + H(+)(in). The enzyme catalyses Mn(2+)(in) + H(+)(in) = Mn(2+)(out) + H(+)(out). It carries out the reaction Zn(2+)(out) + H(+)(out) = Zn(2+)(in) + H(+)(in). The catalysed reaction is Ni(2+)(out) + H(+)(out) = Ni(2+)(in) + H(+)(in). It catalyses the reaction H(+)(in) = H(+)(out). The enzyme catalyses Fe(2+)(in) = Fe(2+)(out). Proton-coupled metal ion symporter operating with a proton to metal ion stoichiometry of 1:1. Selectively transports various divalent metal cations, in decreasing affinity: Cd(2+) &gt; Fe(2+) &gt; Co(2+), Mn(2+) &gt;&gt; Zn(2+), Ni(2+), VO(2+). Essential for maintenance of iron homeostasis by modulating intestinal absorption of dietary Fe(2+) and TF-associated endosomal Fe(2+) transport in erythroid precursors and other cells. Enables Fe(2+) and Mn(2+) ion entry into mitochondria, and is thus expected to promote mitochondrial heme synthesis, iron-sulfur cluster biogenesis and antioxidant defense. Can mediate uncoupled fluxes of either protons or metal ions. The protein is Natural resistance-associated macrophage protein 2 (SLC11A2) of Homo sapiens (Human).